A 1080-amino-acid chain; its full sequence is Histone deacetylase 4 (1080 aa).

3 disordered regions span residues 1–25, 132–165, and 205–312; these read MSSQ…PPRV, KLEQ…ESAV, and TQHS…ISAE. The span at 132–162 shows a compositional bias: basic and acidic residues; sequence KLEQHRQEQELEKQHREQKLQQLKNKEKGKE. Residues 205 to 224 are compositionally biased toward polar residues; sequence TQHSSLDQSSPPQSGVSGTY. Composition is skewed to basic and acidic residues over residues 233-244 and 258-273; these read DSKDDFPLRKTA and KVAE…RKDG. Positions 289-312 are enriched in low complexity; sequence SACNSAPGSGPSSPNNSSNNISAE. The short motif at 348 to 353 is the PxLPxI/L element; it reads PSLPNI. Disordered stretches follow at residues 506–527, 558–579, and 622–646; these read KPNE…ELRE, EPIE…GQRQ, and PLSR…PTKP. Residues 509-527 are compositionally biased toward basic and acidic residues; sequence EPARQHESHPEETEEELRE. Positions 560-571 are enriched in acidic residues; it reads IESDEEEAEPQQ. Residues 625 to 637 are compositionally biased toward polar residues; the sequence is RAQSSPASATFPM. Positions 651–1080 are histone deacetylase; that stretch reads GLVYDTLMLK…DEPMEEEPPL (430 aa). Residues Cys663, Cys665, His671, and Cys747 each contribute to the Zn(2+) site. Residue His799 is part of the active site. A disordered region spans residues 1055 to 1080; it reads MASLSVGVKPAEKRPDDEPMEEEPPL.

The protein belongs to the histone deacetylase family. HD type 2 subfamily.

Its subcellular location is the nucleus. The catalysed reaction is N(6)-acetyl-L-lysyl-[histone] + H2O = L-lysyl-[histone] + acetate. Its function is as follows. Responsible for the deacetylation of lysine residues on the N-terminal part of the core histones (H2A, H2B, H3 and H4). Histone deacetylation gives a tag for epigenetic repression and plays an important role in transcriptional regulation, cell cycle progression and developmental events. Histone deacetylases act via the formation of large multiprotein complexes. This Gallus gallus (Chicken) protein is Histone deacetylase 4 (HDAC4).